Reading from the N-terminus, the 78-residue chain is Consomatin Nc1 (78 aa).

An N-terminal signal peptide occupies residues 1-22 (MQTAYWVMVMVMVWITAPLSEG). The propeptide occupies 23 to 59 (GKPNDVIRGLVPDDLTPQLILRSLISRRRSDKDVGKR). 4-carboxyglutamate is present on E61. A disulfide bridge links C62 with C67. W64 is subject to D-tryptophan. Position 70 is a 4-hydroxyproline (P70). The propeptide occupies 71–78 (LSRRHDLG).

The protein belongs to the conotoxin C superfamily. Consomatin family. In terms of tissue distribution, expressed by the venom duct.

Its subcellular location is the secreted. Functionally, moderately activates human somatostatin receptors (SSTR) with a preferential activation of SSTR1 and SSTR4. In vivo, does not cause behavioral changes in mice within a few minutes of intracranial injection, but causes a progressive loss of movement thereafter. Four to five hours after injection, mice recover, even with the highest dose tested. Shows antinociception and antihyperalgesia activities in two mouse models of acute pain, most probably by acting outside the central nervous system. The protein is Consomatin Nc1 of Conus neocostatus (Cone snail).